The chain runs to 161 residues: Dihydrofolate reductase (161 aa).

Residues 2–161 (KISLISAISN…YNFCFEILSR (160 aa)) form the DHFR domain. Position 6-8 (6-8 (ISA)) interacts with substrate. NADP(+) contacts are provided by residues 7–8 (SA) and 15–20 (IGHNNK). Aspartate 28 contributes to the substrate binding site. 44 to 47 (GRLT) is an NADP(+) binding site. Arginine 59 contributes to the substrate binding site. Residues 64 to 66 (ISH) and 96 to 101 (IGGSKI) each bind NADP(+). Threonine 115 lines the substrate pocket.

Belongs to the dihydrofolate reductase family.

It carries out the reaction (6S)-5,6,7,8-tetrahydrofolate + NADP(+) = 7,8-dihydrofolate + NADPH + H(+). It functions in the pathway cofactor biosynthesis; tetrahydrofolate biosynthesis; 5,6,7,8-tetrahydrofolate from 7,8-dihydrofolate: step 1/1. Key enzyme in folate metabolism. Catalyzes an essential reaction for de novo glycine and purine synthesis, and for DNA precursor synthesis. This chain is Dihydrofolate reductase (folA), found in Buchnera aphidicola subsp. Schizaphis graminum (strain Sg).